The following is a 553-amino-acid chain: Arginine--tRNA ligase (553 aa).

Positions 132–140 match the 'HIGH' region motif; the sequence is PTGDLHIGH.

Belongs to the class-I aminoacyl-tRNA synthetase family. As to quaternary structure, monomer.

It localises to the cytoplasm. The enzyme catalyses tRNA(Arg) + L-arginine + ATP = L-arginyl-tRNA(Arg) + AMP + diphosphate. The sequence is that of Arginine--tRNA ligase from Staphylococcus aureus (strain Mu50 / ATCC 700699).